We begin with the raw amino-acid sequence, 875 residues long: Valine--tRNA ligase (875 aa).

Positions 43–53 (PNVTGVLHMGH) match the 'HIGH' region motif. A 'KMSKS' region motif is present at residues 534 to 538 (KMSKS). Lys-537 serves as a coordination point for ATP. A coiled-coil region spans residues 805–875 (GNLINTEEEL…LKESIAALKK (71 aa)).

The protein belongs to the class-I aminoacyl-tRNA synthetase family. ValS type 1 subfamily. As to quaternary structure, monomer.

The protein localises to the cytoplasm. The catalysed reaction is tRNA(Val) + L-valine + ATP = L-valyl-tRNA(Val) + AMP + diphosphate. Its function is as follows. Catalyzes the attachment of valine to tRNA(Val). As ValRS can inadvertently accommodate and process structurally similar amino acids such as threonine, to avoid such errors, it has a 'posttransfer' editing activity that hydrolyzes mischarged Thr-tRNA(Val) in a tRNA-dependent manner. This is Valine--tRNA ligase from Phocaeicola vulgatus (strain ATCC 8482 / DSM 1447 / JCM 5826 / CCUG 4940 / NBRC 14291 / NCTC 11154) (Bacteroides vulgatus).